We begin with the raw amino-acid sequence, 814 residues long: MKKQFNRMRQLANQTVGRAEKTEVLSEDLLQVEKRLELVKQVSHSTHKKLTACLQGQQGAEADKRSKKLPLTTLAQCLMEGSAILGDDTLLGKMLKLCGETEDELAQELIHFELRVERDVIEPLFLLAEVEIPNIQKQRKHLAKLVLDMDSSRTRWQQTSKSSGLSSSLQPAGAKADALREEMEEAANRVEICRDQLSADMYSFVAKEIDYANYFQTLIEVQAEYHRKSLTLLQAVLPQIKAQQEAWVEKPSFGKPLEEHLMISGREIAFPIEACVTMLLECGMQEEGLFRVAPSASKLKKLKAALDCCVVDVQEYSADPHAIAGALKSYLRELPEPLMTFELYDEWIQASNIQEQDKRLQALWNACEKLPKANHNNIRYLIKFLSKLSEYQDVNKMTPSNMAIVLGPNLLWPQSEGNITEMMTTVSLQIVGIIEPIIQHADWFFPGEIEFNITGSYGSPVHVNHNANYSSMPSPDMDPADRRQPEQARRPLSVATDNMMLEFYKKDGLRKIQSMGVRVMDTSWVARRGSSAGRKAACAPPSMQPPAPPSELAAPLPSPLPEQVPDSPATPAPALSPSGASLQPTPERPSVSKSKELSPGSGQKGSPGSIQGTTCPGTQLGPQPAASPSQLPADQSPHTLRKVSKKLAPIPPKVPFVQPGTVSDQPTGQPSPVSLSPTPPSTPSPYGLSYPPGYSMASGQLSPASAPPLASPSVFTSTLAKSRPTPKPRQRPTLPPPQPPSVSLSASSPQSTEHPMLDGMSPGESMSTDLVHFDVPSIHIELGSTLRLSPLEHARRHSVTDKRDSEEESESTAL.

A BAR domain is found at 14–249 (QTVGRAEKTE…IKAQQEAWVE (236 aa)). The region spanning 255–445 (KPLEEHLMIS…PIIQHADWFF (191 aa)) is the Rho-GAP domain. 3 disordered regions span residues 467–493 (ANYSSMPSPDMDPADRRQPEQARRPLS), 531–768 (SAGR…SMST), and 784–814 (STLRLSPLEHARRHSVTDKRDSEEESESTAL). A compositionally biased stretch (basic and acidic residues) spans 479–489 (PADRRQPEQAR). At serine 493 the chain carries Phosphoserine. 6 stretches are compositionally biased toward low complexity: residues 531–541 (SAGRKAACAPP), 567–581 (SPATPAPALSPSGAS), 598–612 (SPGSGQKGSPGSIQG), 622–637 (PQPAASPSQLPADQSP), 684–704 (SPYGLSYPPGYSMASGQLSPA), and 741–752 (SVSLSASSPQST). The interval 727-814 (KPRQRPTLPP…SEEESESTAL (88 aa)) is interaction with BST2. A compositionally biased stretch (basic and acidic residues) spans 790 to 805 (PLEHARRHSVTDKRDS). The residue at position 805 (serine 805) is a Phosphoserine. Residues 811-814 (STAL) carry the PDZ-binding motif.

As to quaternary structure, interacts with BST2 (via cytoplasmic domain). Interacts (probably via PDZ-binding motif) with SHANK3 (via PDZ domain); the interaction takes place in dendritic spines and promotes GRIA1 exocytosis. Expressed in brain, detected at high levels in hippocampal CA1 (at protein level).

It localises to the cell projection. The protein resides in the dendritic spine. Its subcellular location is the recycling endosome. The protein localises to the presynapse. It is found in the dendrite. Its function is as follows. GTPase-activating protein (GAP) that stimulates the GTPase activity of Rho-type GTPases. Thereby, controls Rho-type GTPases cycling between their active GTP-bound and inactive GDP-bound states. Acts as a GAP at least for CDC42 and RAC1. In neurons, is involved in dendritic spine formation and synaptic plasticity in a specific RAC1-GAP activity. Limits the initiation of exploratory dendritic filopodia. Recruited to actin-patches that seed filopodia, binds specifically to plasma membrane sections that are deformed inward by acto-myosin mediated contractile forces. Acts through GAP activity on RAC1 to reduce actin polymerization necessary for filopodia formation. In association with SHANK3, promotes GRIA1 exocytosis from recycling endosomes and spine morphological changes associated to long-term potentiation. The polypeptide is Rho GTPase-activating protein 44 (Rattus norvegicus (Rat)).